We begin with the raw amino-acid sequence, 327 residues long: GPI-linked NAD(P)(+)--arginine ADP-ribosyltransferase 1 (327 aa).

The first 22 residues, 1–22, serve as a signal peptide directing secretion; the sequence is MQMPAMMSLLLVSVGLMEALQA. Cystine bridges form between cysteine 53–cysteine 277 and cysteine 174–cysteine 224. An N-linked (GlcNAc...) asparagine glycan is attached at asparagine 65. In terms of domain architecture, TR mART core spans 73–273; the sequence is QVYADSWTLA…IYLRALGKHS (201 aa). NAD(+) contacts are provided by tyrosine 121 and arginine 179. Catalysis depends on residues arginine 179 and serine 202. Residue serine 233 participates in NAD(+) binding. Residue glutamate 240 is part of the active site. Asparagine 253 carries an N-linked (GlcNAc...) asparagine glycan. Serine 295 carries GPI-anchor amidated serine lipidation. Positions 296-327 are cleaved as a propeptide — removed in mature form; it reads AMGQSPLSAVWSLLLLLWFLVVRAFPDGPGLL.

This sequence belongs to the Arg-specific ADP-ribosyltransferase family.

The protein resides in the sarcoplasmic reticulum membrane. The catalysed reaction is L-arginyl-[protein] + NAD(+) = N(omega)-(ADP-D-ribosyl)-L-arginyl-[protein] + nicotinamide + H(+). Its function is as follows. Has ADP-ribosyltransferase activity toward GLP1R. The sequence is that of GPI-linked NAD(P)(+)--arginine ADP-ribosyltransferase 1 (ART1) from Homo sapiens (Human).